Here is a 249-residue protein sequence, read N- to C-terminus: 23S rRNA (guanosine-2'-O-)-methyltransferase RlmB (249 aa).

Residues G200, I220, and L229 each contribute to the S-adenosyl-L-methionine site.

It belongs to the class IV-like SAM-binding methyltransferase superfamily. RNA methyltransferase TrmH family. RlmB subfamily.

The protein localises to the cytoplasm. The enzyme catalyses guanosine(2251) in 23S rRNA + S-adenosyl-L-methionine = 2'-O-methylguanosine(2251) in 23S rRNA + S-adenosyl-L-homocysteine + H(+). Specifically methylates the ribose of guanosine 2251 in 23S rRNA. This is 23S rRNA (guanosine-2'-O-)-methyltransferase RlmB from Xylella fastidiosa (strain 9a5c).